The chain runs to 446 residues: Phosphoglucosamine mutase (446 aa).

The active-site Phosphoserine intermediate is serine 101. Serine 101, aspartate 240, aspartate 242, and aspartate 244 together coordinate Mg(2+). The residue at position 101 (serine 101) is a Phosphoserine.

It belongs to the phosphohexose mutase family. Mg(2+) is required as a cofactor. Activated by phosphorylation.

The enzyme catalyses alpha-D-glucosamine 1-phosphate = D-glucosamine 6-phosphate. Its function is as follows. Catalyzes the conversion of glucosamine-6-phosphate to glucosamine-1-phosphate. This is Phosphoglucosamine mutase from Coxiella burnetii (strain Dugway 5J108-111).